Consider the following 180-residue polypeptide: MNELKQTWKTMLSEFQDQAELKQDQLFVLGCSTSEVAGSRIGTSGSVDIAESIYSGLAELREKTGIHLAFQCCEHLNRALVVEAETAKLFRLPTVSAVPVPKAGGAMASYAFKQMKSPVLVETIQADAGIDIGDTFIGMHLKPVAVPVRVSQNSLGSAHVTLARTRPKLIGGVRAVYECE.

This sequence belongs to the UPF0340 family.

The polypeptide is UPF0340 protein YwlG (ywlG) (Bacillus subtilis (strain 168)).